A 214-amino-acid chain; its full sequence is Elongation factor Ts (214 aa).

The tract at residues 80 to 83 (TDFV) is involved in Mg(2+) ion dislocation from EF-Tu.

It belongs to the EF-Ts family.

It localises to the cytoplasm. In terms of biological role, associates with the EF-Tu.GDP complex and induces the exchange of GDP to GTP. It remains bound to the aminoacyl-tRNA.EF-Tu.GTP complex up to the GTP hydrolysis stage on the ribosome. This is Elongation factor Ts from Syntrophomonas wolfei subsp. wolfei (strain DSM 2245B / Goettingen).